Consider the following 192-residue polypeptide: Ferritin-like protein (192 aa).

Fe(3+)-binding residues include His-44, Glu-48, and His-102. Positions 143–179 (RFDHDYADPHAHHDEHRDHLADMPSAGSSHEEVQPVA) are linker. Positions 149–163 (ADPHAHHDEHRDHLA) are enriched in basic and acidic residues. Positions 149–192 (ADPHAHHDEHRDHLADMPSAGSSHEEVQPVAHKKKGFTVGSLIQ) are disordered. The tract at residues 180 to 192 (HKKKGFTVGSLIQ) is targeting peptide.

Homodimer, with 2 Fe atoms bound at the subunit interface (without encapsulin), probably also a dimer when encapsulated. 42 electron-dense accretions can be seen inside the nanocompartment which are probably this cargo protein, although perhaps up to one cargo dimer can be bound per shell protein.

The protein localises to the encapsulin nanocompartment. It carries out the reaction 4 Fe(2+) + O2 + 4 H(+) = 4 Fe(3+) + 2 H2O. Cargo protein of a type 1 encapsulin nanocompartment. A ferritin-like iron-binding protein probably involved in iron mineralization in the encapsulin nanocompartment. Has ferroxidase activity even when encapsulated, the rate is probably controlled by the rate of Fe flux across the nanocompartment pores. Part of the iron-mineralizing encapsulin-associated Firmicute (IMEF) system. 2 different cargo proteins have been identified (IMEF and Fer); when both are expressed in E.coli with the shell protein only IMEF is detected within the nanocompartment. E.coli expressing all 3 genes stores the largest amount of iron and is protected from Fe/H2O2-induced oxidative stress. This chain is Ferritin-like protein, found in Bacillus thermotolerans (Quasibacillus thermotolerans).